Here is a 145-residue protein sequence, read N- to C-terminus: Cytochrome b (145 aa).

The helical transmembrane segment at 38–58 (FFALHFLLPFVLAALVIMHLI) threads the bilayer. Heme b-binding residues include His42 and His56. His61 provides a ligand contact to a ubiquinone. The helical transmembrane segment at 85–105 (FVFKDLVTVFIFFIVLSVFVF) threads the bilayer.

Belongs to the cytochrome b family. Fungal cytochrome b-c1 complex contains 10 subunits; 3 respiratory subunits, 2 core proteins and 5 low-molecular weight proteins. Cytochrome b-c1 complex is a homodimer. Heme b is required as a cofactor.

Its subcellular location is the mitochondrion inner membrane. Its function is as follows. Component of the ubiquinol-cytochrome c reductase complex (complex III or cytochrome b-c1 complex) that is part of the mitochondrial respiratory chain. The b-c1 complex mediates electron transfer from ubiquinol to cytochrome c. Contributes to the generation of a proton gradient across the mitochondrial membrane that is then used for ATP synthesis. This Aspergillus fumigatus (Neosartorya fumigata) protein is Cytochrome b (cob).